The chain runs to 440 residues: Xylose isomerase (440 aa).

The Mg(2+) site is built by D307 and D309.

The protein belongs to the xylose isomerase family. As to quaternary structure, homotetramer. It depends on Mg(2+) as a cofactor.

It localises to the cytoplasm. It carries out the reaction alpha-D-xylose = alpha-D-xylulofuranose. The polypeptide is Xylose isomerase (Pectobacterium carotovorum subsp. carotovorum (strain PC1)).